The chain runs to 677 residues: Multicopper oxidase GIP1 (677 aa).

Positions 1–23 are cleaved as a signal peptide; the sequence is MLTSPRLILLLLAWVFSALVASA. Plastocyanin-like domains lie at 31–150 and 179–379; these read ITWE…IRRK and LVMV…RYKG. N-linked (GlcNAc...) asparagine glycosylation occurs at Asn-76. Cu cation-binding residues include His-80, His-82, His-130, and His-132. N-linked (GlcNAc...) asparagine glycans are attached at residues Asn-228, Asn-283, Asn-396, and Asn-478. The Plastocyanin-like 3 domain occupies 469 to 588; sequence DEGLVIRTKN…AGGMAIAILD (120 aa). His-503 is a binding site for Cu cation. A glycan (N-linked (GlcNAc...) asparagine) is linked at Asn-520. The disordered stretch occupies residues 629 to 651; that stretch reads PLLAVSPSGGPKKDSGETSASDS.

It belongs to the multicopper oxidase family. Might be part of an extracellular enzyme complex composed of GIP1, aurF, aurO and aurS.

Its subcellular location is the secreted. It localises to the extracellular space. It functions in the pathway pigment biosynthesis. Functionally, multicopper oxidase; part of the gene cluster that mediates the biosynthesis of aurofusarin, a red mycelium pigment which is acting as a mycotoxin. The first step is performed by the polyketide synthase which condenses one acetyl-CoA and 6 malonyl-CoA units to form the first intermediate, the cyclic heptaketide and yellow pigment YWA1. The C2 hydroxyl group in the pyrone ring of YWA1 is probably formed during ring closure by an aldol-type cyclization reaction. The dehydratase aurZ then acts as the first tailoring enzyme in the aurofusarin biosynthetic pathway by converting YWA1 to nor-rubrofusarin. Nor-rubrofusarin is then methylated to rubrofusarin by the O-methyltransferase aurJ. Rubrofusarin is then transported across the plasma membrane by the rubrofusarin-specific pump aurT for further enzymatic processing by the extracellular complex composed of GIP1, aurF, aurO and aurS to yield aurofusarin. This is Multicopper oxidase GIP1 from Gibberella zeae (strain ATCC MYA-4620 / CBS 123657 / FGSC 9075 / NRRL 31084 / PH-1) (Wheat head blight fungus).